Here is a 166-residue protein sequence, read N- to C-terminus: Disulfide bond formation protein B (166 aa).

Over 1 to 11 the chain is Cytoplasmic; sequence MCNKLFAGRRG. Residues 12-28 form a helical membrane-spanning segment; it reads YFLGFVASFGLVGLALF. Residues 29-46 lie on the Periplasmic side of the membrane; that stretch reads LQQKYNLEPCPLCISQRI. An intrachain disulfide couples cysteine 38 to cysteine 41. The chain crosses the membrane as a helical span at residues 47-63; the sequence is AFMALGILFLLAALHNP. Residues 64 to 69 are Cytoplasmic-facing; that stretch reads GRVGRK. Residues 70-87 traverse the membrane as a helical segment; the sequence is VYGLLHVIAAATGIGIAA. The Periplasmic portion of the chain corresponds to 88 to 144; that stretch reads RHIWIQANPDKVMAECGAGFDYIMETFPLKKALDLIFKGTGECSAIDWTLFGLTIPQ. Cysteine 103 and cysteine 130 form a disulfide bridge. The chain crosses the membrane as a helical span at residues 145-163; the sequence is LSLIAFVGLGLFAVLLAFH. The Cytoplasmic portion of the chain corresponds to 164-166; it reads KKA.

The protein belongs to the DsbB family.

The protein resides in the cell inner membrane. Functionally, required for disulfide bond formation in some periplasmic proteins. Acts by oxidizing the DsbA protein. The chain is Disulfide bond formation protein B from Methylobacillus flagellatus (strain ATCC 51484 / DSM 6875 / VKM B-1610 / KT).